Here is a 394-residue protein sequence, read N- to C-terminus: 8-amino-7-oxononanoate synthase (394 aa).

Arginine 21 lines the substrate pocket. Residue glycine 112 to tyrosine 113 participates in pyridoxal 5'-phosphate binding. Histidine 137 is a binding site for substrate. Pyridoxal 5'-phosphate is bound by residues serine 183, histidine 211, and threonine 239. Lysine 242 carries the post-translational modification N6-(pyridoxal phosphate)lysine. Threonine 358 is a binding site for substrate.

This sequence belongs to the class-II pyridoxal-phosphate-dependent aminotransferase family. BioF subfamily. Homodimer. Pyridoxal 5'-phosphate serves as cofactor.

The enzyme catalyses 6-carboxyhexanoyl-[ACP] + L-alanine + H(+) = (8S)-8-amino-7-oxononanoate + holo-[ACP] + CO2. It participates in cofactor biosynthesis; biotin biosynthesis. Catalyzes the decarboxylative condensation of pimeloyl-[acyl-carrier protein] and L-alanine to produce 8-amino-7-oxononanoate (AON), [acyl-carrier protein], and carbon dioxide. The polypeptide is 8-amino-7-oxononanoate synthase (Burkholderia pseudomallei (strain K96243)).